The following is a 286-amino-acid chain: NAD(P)H azoreductase (286 aa).

Residues 6 to 11, Arg31, and 136 to 141 contribute to the NADP(+) site; these read GGTGTI and GFFMQN.

The protein belongs to the NmrA-type oxidoreductase family. Azoreductase type 3 subfamily. Monomer.

Functionally, catalyzes the reductive cleavage of azo bond in aromatic azo compounds to the corresponding amines. Uses preferentially NADPH rather than NADH as an electron donor for its activity. The enzyme reductively cleaved Orange II and carboxy-Orange II, and can also reduce several sulfonated structural analogs, which carry a hydroxy group in the 2 position of the naphthol ring. The polypeptide is NAD(P)H azoreductase (azoB) (Xenophilus azovorans).